The primary structure comprises 343 residues: Dihydroorotase (343 aa).

His-14 and His-16 together coordinate Zn(2+). Residues 16–18 and Asn-42 each bind substrate; that span reads HLR. 3 residues coordinate Zn(2+): Lys-100, His-137, and His-175. Residue Lys-100 is modified to N6-carboxylysine. Substrate is bound at residue His-137. Residue Leu-220 coordinates substrate. Residue Asp-248 participates in Zn(2+) binding. Residue Asp-248 is part of the active site. Residues His-252 and Ala-264 each coordinate substrate.

This sequence belongs to the metallo-dependent hydrolases superfamily. DHOase family. Class II DHOase subfamily. As to quaternary structure, homodimer. It depends on Zn(2+) as a cofactor.

The catalysed reaction is (S)-dihydroorotate + H2O = N-carbamoyl-L-aspartate + H(+). The protein operates within pyrimidine metabolism; UMP biosynthesis via de novo pathway; (S)-dihydroorotate from bicarbonate: step 3/3. Its function is as follows. Catalyzes the reversible cyclization of carbamoyl aspartate to dihydroorotate. The chain is Dihydroorotase from Synechococcus sp. (strain CC9902).